Reading from the N-terminus, the 225-residue chain is Probable septum site-determining protein MinC (225 aa).

The disordered stretch occupies residues 87–112 (PTHMASPQGNSSKTRSSDTQPKPKTP). Positions 91–108 (ASPQGNSSKTRSSDTQPK) are enriched in polar residues.

Belongs to the MinC family. In terms of assembly, interacts with MinD and FtsZ.

Its function is as follows. Cell division inhibitor that blocks the formation of polar Z ring septums. Rapidly oscillates between the poles of the cell to destabilize FtsZ filaments that have formed before they mature into polar Z rings. Prevents FtsZ polymerization. In Prochlorococcus marinus (strain MIT 9313), this protein is Probable septum site-determining protein MinC.